A 93-amino-acid chain; its full sequence is Small ribosomal subunit protein uS19 (93 aa).

This sequence belongs to the universal ribosomal protein uS19 family.

Its function is as follows. Protein S19 forms a complex with S13 that binds strongly to the 16S ribosomal RNA. The sequence is that of Small ribosomal subunit protein uS19 from Nocardia farcinica (strain IFM 10152).